An 886-amino-acid polypeptide reads, in one-letter code: Microsomal triacylglycerol transfer protein (886 aa).

A signal peptide spans 1-27 (MENKNKKCLRTLLLLALFLGLLEDGKT). Residues 30–653 (IAPNSQQIFK…SQASSFKLGI (624 aa)) enclose the Vitellogenin domain. N-linked (GlcNAc...) asparagine glycans are attached at residues Asn358, Asn484, Asn502, and Asn616.

It is found in the endoplasmic reticulum. The protein resides in the golgi apparatus. The catalysed reaction is a 1,2-diacyl-sn-glycero-3-phosphocholine(in) = a 1,2-diacyl-sn-glycero-3-phosphocholine(out). It catalyses the reaction a 1,2-diacyl-sn-glycero-3-phosphoethanolamine(in) = a 1,2-diacyl-sn-glycero-3-phosphoethanolamine(out). In terms of biological role, catalyzes the transport of phospholipids such as phosphatidylethanolamine (1,2-diacyl-sn-glycero-3-phosphoethanolamine) and phosphatidylcholine (1,2-diacyl-sn-glycero-3-phosphocholine) between membranes. Required for the assembly and secretion of plasma lipoproteins that contain apolipoprotein B. The chain is Microsomal triacylglycerol transfer protein from Drosophila melanogaster (Fruit fly).